Reading from the N-terminus, the 858-residue chain is Heat shock protein 105 kDa (858 aa).

N-acetylserine is present on Ser-2. Lys-471 is subject to N6-acetyllysine. 2 disordered regions span residues 500–585 and 801–858; these read KVPT…PPEA and VNQP…MDLD. The segment covering 504–515 has biased composition (acidic residues); sequence EEDDGSSVEADM. Residues Ser-509 and Ser-510 each carry the phosphoserine modification. Polar residues predominate over residues 533–549; the sequence is QQDNSEAGTQPQVQTDG. At Ser-558 the chain carries Phosphoserine. Basic and acidic residues-rich tracts occupy residues 564–585 and 806–815; these read EENK…PPEA and PKIESPKLER. Position 810 is a phosphoserine (Ser-810). Thr-816 carries the phosphothreonine modification. The span at 822-834 shows a compositional bias: basic and acidic residues; that stretch reads LDKKEDLEGKDNF.

Belongs to the heat shock protein 70 family. In terms of assembly, interacts with HSPA8/HSC70. Interacts with HSPA1A (via NBD) and HSPA1B (via NBD). In terms of processing, phosphorylation on Ser-509 may be important for regulation of the HSPA8/HSC70 chaperone activity. As to expression, predominantly expressed in the brain and also found in the liver.

The protein localises to the cytoplasm. Acts as a nucleotide-exchange factor (NEF) for chaperone proteins HSPA1A and HSPA1B, promoting the release of ADP from HSPA1A/B thereby triggering substrate release. Prevents the aggregation of denatured proteins in cells under severe stress, on which the ATP levels decrease markedly. Inhibits HSPA8/HSC70 ATPase and chaperone activities. This Cricetulus griseus (Chinese hamster) protein is Heat shock protein 105 kDa (HSPH1).